The sequence spans 558 residues: Phosphatidylserine lipase ABHD16A (558 aa).

Helical transmembrane passes span 60-80 and 93-113; these read ILAL…FAFF and VVPF…VACL. At 114–558 the chain is on the cytoplasmic side; it reads RGIGRWTNPQ…AQHFQMPWHL (445 aa). In terms of domain architecture, AB hydrolase-1 spans 281–406; that stretch reads LVICCEGNAG…ALVTRTVRQH (126 aa). Catalysis depends on charge relay system residues Ser355, Asp430, and His507.

This sequence belongs to the AB hydrolase superfamily. ABHD16 family.

The protein localises to the membrane. It catalyses the reaction 1-heptadecanoyl-2-(5Z,8Z,11Z,14Z-eicosatetraenoyl)-sn-glycero-3-phosphoserine + H2O = 1-heptadecanoyl-sn-glycero-3-phosphoserine + (5Z,8Z,11Z,14Z)-eicosatetraenoate + H(+). The catalysed reaction is 1-hexadecanoyl-2-(9Z-octadecenoyl)-sn-glycero-3-phospho-L-serine + H2O = 1-hexadecanoyl-sn-glycero-3-phospho-L-serine + (9Z)-octadecenoate + H(+). It carries out the reaction 1-octadecanoyl-2-(9Z,12Z-octadecadienoyl)-sn-glycero-3-phosphoserine + H2O = 1-octadecanoyl-sn-glycero-3-phosphoserine + (9Z,12Z)-octadecadienoate + H(+). The enzyme catalyses 1-heptadecanoyl-2-(5Z,8Z,11Z,14Z-eicosatetraenoyl)-sn-glycero-3-phosphocholine + H2O = 1-heptadecanoyl-sn-glycero-3-phosphocholine + (5Z,8Z,11Z,14Z)-eicosatetraenoate + H(+). It catalyses the reaction 1-hexadecanoyl-2-(9Z-octadecenoyl)-sn-glycero-3-phosphoglycerol + H2O = 1-hexadecanoyl-sn-glycero-3-phosphoglycerol + (9Z)-octadecenoate + H(+). The catalysed reaction is 1-hexadecanoyl-2-(9Z-octadecenoyl)-sn-glycero-3-phospho-(1D-myo-inositol) + H2O = 1-hexadecanoyl-sn-glycero-3-phospho-(1D-myo-inositol) + (9Z)-octadecenoate + H(+). It carries out the reaction 1-heptadecanoyl-2-(5Z,8Z,11Z,14Z-eicosatetraenoyl)-sn-glycero-3-phosphoethanolamine + H2O = 1-heptadecanoyl-sn-glycero-3-phosphoethanolamine + (5Z,8Z,11Z,14Z)-eicosatetraenoate + H(+). The enzyme catalyses 1-hexadecanoyl-2-(9Z-octadecenoyl)-sn-glycero-3-phospho-(1'-sn-glycerol) + H2O = 1-hexadecanoyl-sn-glycero-3-phospho-(1'-sn-glycerol) + (9Z)-octadecenoate + H(+). It catalyses the reaction Hydrolyzes glycerol monoesters of long-chain fatty acids.. The catalysed reaction is 1-tetradecanoylglycerol + H2O = tetradecanoate + glycerol + H(+). It carries out the reaction 2-hexadecanoylglycerol + H2O = glycerol + hexadecanoate + H(+). The enzyme catalyses 1-(9Z-octadecenoyl)-glycerol + H2O = glycerol + (9Z)-octadecenoate + H(+). It catalyses the reaction 2-(9Z-octadecenoyl)-glycerol + H2O = glycerol + (9Z)-octadecenoate + H(+). The catalysed reaction is 2-(9Z,12Z-octadecadienoyl)-glycerol + H2O = (9Z,12Z)-octadecadienoate + glycerol + H(+). It carries out the reaction 1-(5Z,8Z,11Z,14Z-eicosatetraenoyl)-glycerol + H2O = glycerol + (5Z,8Z,11Z,14Z)-eicosatetraenoate + H(+). The enzyme catalyses 2-(5Z,8Z,11Z,14Z-eicosatetraenoyl)-glycerol + H2O = glycerol + (5Z,8Z,11Z,14Z)-eicosatetraenoate + H(+). It catalyses the reaction prostaglandin D2-1-glycerol ester + H2O = prostaglandin D2 + glycerol + H(+). The catalysed reaction is 2-glyceryl-15-deoxy-Delta(12,14)-prostaglandin J2 + H2O = 15-deoxy-Delta(12,14)-prostaglandin J2 + glycerol + H(+). It carries out the reaction 1-(9Z,12Z-octadecadienoyl)-glycerol + H2O = (9Z,12Z)-octadecadienoate + glycerol + H(+). Specifically inhibited by alpha-alkylidene-beta-lactone KC01 ((Z)-6-(2-Oxo-4-tridecyloxetan-3-ylidene)hexanamide). In terms of biological role, phosphatidylserine (PS) lipase that mediates the hydrolysis of phosphatidylserine to generate lysophosphatidylserine (LPS). LPS constitutes a class of signaling lipids that regulates immunological and neurological processes. Has no activity towards diacylglycerol, triacylglycerol or lysophosphatidylserine lipase. Also has monoacylglycerol lipase activity, with preference for 1-(9Z,12Z-octadecadienoyl)-glycerol (1-LG) and 2-glyceryl-15-deoxy-Delta(12,14)-prostaglandin J2 (15d-PGJ(2)-G). The chain is Phosphatidylserine lipase ABHD16A from Mus musculus (Mouse).